The chain runs to 364 residues: Dihydroorotate dehydrogenase (quinone) (364 aa).

Residues alanine 61 to lysine 65 and threonine 85 contribute to the FMN site. Substrate is bound at residue lysine 65. Asparagine 110–phenylalanine 114 provides a ligand contact to substrate. FMN-binding residues include asparagine 139 and asparagine 170. Asparagine 170 contacts substrate. Serine 173 serves as the catalytic Nucleophile. Asparagine 175 serves as a coordination point for substrate. The FMN site is built by lysine 215 and serine 243. Residue asparagine 244–threonine 245 coordinates substrate. FMN-binding positions include glycine 266, glycine 295, and tyrosine 316–threonine 317.

This sequence belongs to the dihydroorotate dehydrogenase family. Type 2 subfamily. As to quaternary structure, monomer. FMN serves as cofactor.

Its subcellular location is the cell membrane. It catalyses the reaction (S)-dihydroorotate + a quinone = orotate + a quinol. It functions in the pathway pyrimidine metabolism; UMP biosynthesis via de novo pathway; orotate from (S)-dihydroorotate (quinone route): step 1/1. Its function is as follows. Catalyzes the conversion of dihydroorotate to orotate with quinone as electron acceptor. The chain is Dihydroorotate dehydrogenase (quinone) from Brucella abortus (strain S19).